The primary structure comprises 100 residues: Large ribosomal subunit protein uL23 (100 aa).

It belongs to the universal ribosomal protein uL23 family. Part of the 50S ribosomal subunit. Contacts protein L29, and trigger factor when it is bound to the ribosome.

One of the early assembly proteins it binds 23S rRNA. One of the proteins that surrounds the polypeptide exit tunnel on the outside of the ribosome. Forms the main docking site for trigger factor binding to the ribosome. The polypeptide is Large ribosomal subunit protein uL23 (Buchnera aphidicola subsp. Schizaphis graminum (strain Sg)).